A 206-amino-acid polypeptide reads, in one-letter code: Imidazoleglycerol-phosphate dehydratase (206 aa).

It belongs to the imidazoleglycerol-phosphate dehydratase family.

Its subcellular location is the cytoplasm. The catalysed reaction is D-erythro-1-(imidazol-4-yl)glycerol 3-phosphate = 3-(imidazol-4-yl)-2-oxopropyl phosphate + H2O. It functions in the pathway amino-acid biosynthesis; L-histidine biosynthesis; L-histidine from 5-phospho-alpha-D-ribose 1-diphosphate: step 6/9. The sequence is that of Imidazoleglycerol-phosphate dehydratase from Leptospira borgpetersenii serovar Hardjo-bovis (strain JB197).